Reading from the N-terminus, the 512-residue chain is Cytochrome P450 26B1 (512 aa).

Cys441 serves as a coordination point for heme.

Belongs to the cytochrome P450 family. It depends on heme as a cofactor.

Its subcellular location is the endoplasmic reticulum membrane. The protein localises to the microsome membrane. It catalyses the reaction all-trans-retinoate + reduced [NADPH--hemoprotein reductase] + O2 = all-trans-4-hydroxyretinoate + oxidized [NADPH--hemoprotein reductase] + H2O + H(+). The enzyme catalyses all-trans-retinoate + reduced [NADPH--hemoprotein reductase] + O2 = all-trans-18-hydroxyretinoate + oxidized [NADPH--hemoprotein reductase] + H2O + H(+). A cytochrome P450 monooxygenase involved in the metabolism of retinoates (RAs), the active metabolites of vitamin A, and critical signaling molecules in animals. RAs exist as at least four different isomers: all-trans-RA (atRA), 9-cis-RA, 13-cis-RA, and 9,13-dicis-RA, where atRA is considered to be the biologically active isomer, although 9-cis-RA and 13-cis-RA also have activity. Catalyzes the hydroxylation of atRA primarily at C-4 and C-18, thereby contributing to the regulation of atRA homeostasis and signaling. Hydroxylation of atRA limits its biological activity and initiates a degradative process leading to its eventual elimination. Involved in the convertion of atRA to all-trans-4-oxo-RA. Can oxidize all-trans-13,14-dihydroretinoate (DRA) to metabolites which could include all-trans-4-oxo-DRA, all-trans-4-hydroxy-DRA, all-trans-5,8-epoxy-DRA, and all-trans-18-hydroxy-DRA. Shows preference for the following substrates: atRA &gt; 9-cis-RA &gt; 13-cis-RA. Plays a central role in germ cell development: acts by degrading RAs in the developing testis, preventing STRA8 expression, thereby leading to delay of meiosis. Required for the maintenance of the undifferentiated state of male germ cells during embryonic development in Sertoli cells, inducing arrest in G0 phase of the cell cycle and preventing meiotic entry. Plays a role in skeletal development, both at the level of patterning and in the ossification of bone and the establishment of some synovial joints. Essential for postnatal survival. In terms of biological role, also has a significant activity in oxidation of tazarotenic acid and may therefore metabolize that xenobiotic in vivo. The polypeptide is Cytochrome P450 26B1 (CYP26B1) (Bos taurus (Bovine)).